Here is a 166-residue protein sequence, read N- to C-terminus: Small ribosomal subunit protein uS5 (166 aa).

In terms of domain architecture, S5 DRBM spans 11–74; it reads LQEKLVQVNR…DQARRNMVKV (64 aa).

The protein belongs to the universal ribosomal protein uS5 family. As to quaternary structure, part of the 30S ribosomal subunit. Contacts proteins S4 and S8.

With S4 and S12 plays an important role in translational accuracy. Functionally, located at the back of the 30S subunit body where it stabilizes the conformation of the head with respect to the body. This Chromohalobacter salexigens (strain ATCC BAA-138 / DSM 3043 / CIP 106854 / NCIMB 13768 / 1H11) protein is Small ribosomal subunit protein uS5.